Reading from the N-terminus, the 314-residue chain is Acetyl-coenzyme A carboxylase carboxyl transferase subunit alpha (314 aa).

Residues glutamate 32–serine 289 enclose the CoA carboxyltransferase C-terminal domain.

This sequence belongs to the AccA family. As to quaternary structure, acetyl-CoA carboxylase is a heterohexamer composed of biotin carboxyl carrier protein (AccB), biotin carboxylase (AccC) and two subunits each of ACCase subunit alpha (AccA) and ACCase subunit beta (AccD).

The protein resides in the cytoplasm. It carries out the reaction N(6)-carboxybiotinyl-L-lysyl-[protein] + acetyl-CoA = N(6)-biotinyl-L-lysyl-[protein] + malonyl-CoA. Its pathway is lipid metabolism; malonyl-CoA biosynthesis; malonyl-CoA from acetyl-CoA: step 1/1. Functionally, component of the acetyl coenzyme A carboxylase (ACC) complex. First, biotin carboxylase catalyzes the carboxylation of biotin on its carrier protein (BCCP) and then the CO(2) group is transferred by the carboxyltransferase to acetyl-CoA to form malonyl-CoA. The protein is Acetyl-coenzyme A carboxylase carboxyl transferase subunit alpha of Staphylococcus aureus (strain bovine RF122 / ET3-1).